The primary structure comprises 113 residues: Protein FMC1 homolog (113 aa).

The interval 94–113 is disordered; sequence SAGLVGLQLPHQPGGKGWEP.

Belongs to the FMC1 family. As to quaternary structure, interacts with ATPAF2.

It localises to the mitochondrion. In terms of biological role, plays a role in the assembly/stability of the mitochondrial membrane ATP synthase (F(1)F(0) ATP synthase or Complex V). In Rattus norvegicus (Rat), this protein is Protein FMC1 homolog.